The sequence spans 147 residues: Large ribosomal subunit protein uL11 (147 aa).

Belongs to the universal ribosomal protein uL11 family. As to quaternary structure, part of the ribosomal stalk of the 50S ribosomal subunit. Interacts with L10 and the large rRNA to form the base of the stalk. L10 forms an elongated spine to which L12 dimers bind in a sequential fashion forming a multimeric L10(L12)X complex. Post-translationally, one or more lysine residues are methylated.

Forms part of the ribosomal stalk which helps the ribosome interact with GTP-bound translation factors. In Phocaeicola vulgatus (strain ATCC 8482 / DSM 1447 / JCM 5826 / CCUG 4940 / NBRC 14291 / NCTC 11154) (Bacteroides vulgatus), this protein is Large ribosomal subunit protein uL11.